The following is a 484-amino-acid chain: Glycogen synthase (484 aa).

Residue lysine 15 participates in ADP-alpha-D-glucose binding.

The protein belongs to the glycosyltransferase 1 family. Bacterial/plant glycogen synthase subfamily.

The catalysed reaction is [(1-&gt;4)-alpha-D-glucosyl](n) + ADP-alpha-D-glucose = [(1-&gt;4)-alpha-D-glucosyl](n+1) + ADP + H(+). It functions in the pathway glycan biosynthesis; glycogen biosynthesis. Its function is as follows. Synthesizes alpha-1,4-glucan chains using ADP-glucose. The sequence is that of Glycogen synthase from Syntrophotalea carbinolica (strain DSM 2380 / NBRC 103641 / GraBd1) (Pelobacter carbinolicus).